Reading from the N-terminus, the 501-residue chain is L-ornithine N(5)-monooxygenase (501 aa).

The segment at 1 to 31 (MESVERKSESSYLGMRNMQPEQRLSLDPPRL) is disordered. Residues 83 to 91 (ERQKQFAWH) and Gln-102 contribute to the FAD site. Substrate is bound at residue Lys-107. Residue Val-168 coordinates FAD. NADP(+) contacts are provided by residues 254 to 257 (SGQS) and Arg-279. Residues 293–296 (NEIF) and Asn-323 contribute to the substrate site. Residue 323-325 (NYS) participates in NADP(+) binding. A disordered region spans residues 366–390 (EHHGPQSRMRIHLKSSKPESEGAAN). The segment covering 381–390 (SKPESEGAAN) has biased composition (basic and acidic residues). Position 466 to 468 (466 to 468 (SLL)) interacts with FAD. A substrate-binding site is contributed by Ser-469.

This sequence belongs to the lysine N(6)-hydroxylase/L-ornithine N(5)-oxygenase family. In terms of assembly, homotetramer. FAD is required as a cofactor.

The enzyme catalyses L-ornithine + NADPH + O2 = N(5)-hydroxy-L-ornithine + NADP(+) + H2O. It catalyses the reaction L-ornithine + NADH + O2 = N(5)-hydroxy-L-ornithine + NAD(+) + H2O. It functions in the pathway siderophore biosynthesis; ferrichrome biosynthesis. Functionally, L-ornithine N(5)-monooxygenase; part of the siderophore biosynthetic pathway. Aspergillus fumigatus produces four types of siderophores, low-molecular-mass iron chelators, including excreted fusarinine C (FsC) and triacetylfusarinine C (TAFC) for iron uptake; and intacellular ferricrocin (FC) for hyphal and hydroxyferricrocin (HFC) for conidial iron distribution and storage. TAFC consists of three N(2)-acetyl-N(5)-anhydromevalonyl-N(5)-hydroxyornithine residues cyclically linked by ester bonds; FC is a cyclic hexapeptide with the structure Gly-Ser-Gly-(N(5)-acetyl-N(5)-hydroxyornithine)x3. The biosynthesis of all four siderophores depends on the hydroxylation of ornithine, catalyzed by the monooxygenase sidA. SidA is highly specific for its substrate, only hydrolyzing l-ornithine, and has preference for NADPH over NADH, NADPH playing a role in stabilization of the C4a-hydroperoxyflavin intermediate. Subsequently, the pathways for biosynthesis of extra- and intracellular siderophores split. For biosynthesis of extracellular siderophores, the transacylase sidF transfers anhydromevalonyl to N(5)-hydroxyornithine. The required anhydromevalonyl-CoA moiety is derived from mevalonate by CoA ligation and dehydration catalyzed by sidI and sidH respectively. The acetylation of N(5)-hydroxyornithine for FC biosynthesis involves the constitutively expressed sidL. FC is hydroxylated to HFC by an as yet uncharacterized enzyme during conidiation. Assembly of fusarinine C (FsC) and FC is catalyzed by two different nonribosomal peptide synthetases (NRPS), sidD and sidC respectively. Subsequently, sidG catalyzes N2-acetylation of FsC for forming TAFC. Both extra- and intracellular siderophores are crucial for growth during iron limitation and virulence. The protein is L-ornithine N(5)-monooxygenase of Aspergillus fumigatus (strain ATCC MYA-4609 / CBS 101355 / FGSC A1100 / Af293) (Neosartorya fumigata).